The following is a 319-amino-acid chain: ATP-dependent 6-phosphofructokinase (319 aa).

Gly11 provides a ligand contact to ATP. Arg21–Arg25 contributes to the ADP binding site. ATP-binding positions include Arg72–Cys73 and Gly102–Ser105. Asp103 contributes to the Mg(2+) binding site. Position 125-127 (Thr125–Asp127) interacts with substrate. Catalysis depends on Asp127, which acts as the Proton acceptor. Residue Arg154 coordinates ADP. Substrate is bound by residues Arg162 and Met169–Arg171. ADP contacts are provided by residues Gly185–Glu187, Arg211, and Lys213–His215. Substrate-binding positions include Glu222, Arg243, and His249–Arg252.

It belongs to the phosphofructokinase type A (PFKA) family. ATP-dependent PFK group I subfamily. Prokaryotic clade 'B1' sub-subfamily. As to quaternary structure, homotetramer. Requires Mg(2+) as cofactor.

The protein localises to the cytoplasm. The enzyme catalyses beta-D-fructose 6-phosphate + ATP = beta-D-fructose 1,6-bisphosphate + ADP + H(+). It functions in the pathway carbohydrate degradation; glycolysis; D-glyceraldehyde 3-phosphate and glycerone phosphate from D-glucose: step 3/4. With respect to regulation, allosterically activated by ADP and other diphosphonucleosides, and allosterically inhibited by phosphoenolpyruvate. Functionally, catalyzes the phosphorylation of D-fructose 6-phosphate to fructose 1,6-bisphosphate by ATP, the first committing step of glycolysis. The polypeptide is ATP-dependent 6-phosphofructokinase (Bacillus cytotoxicus (strain DSM 22905 / CIP 110041 / 391-98 / NVH 391-98)).